The chain runs to 173 residues: NADH-ubiquinone oxidoreductase chain 6 (173 aa).

5 helical membrane-spanning segments follow: residues 1–21, 27–47, 48–68, 87–107, and 139–159; these read MTYF…AVAS, YGVV…LSLG, VSFV…VVFV, VVGY…IGGF, and CGVG…FVVL.

The protein belongs to the complex I subunit 6 family.

The protein resides in the mitochondrion membrane. The enzyme catalyses a ubiquinone + NADH + 5 H(+)(in) = a ubiquinol + NAD(+) + 4 H(+)(out). Functionally, core subunit of the mitochondrial membrane respiratory chain NADH dehydrogenase (Complex I) that is believed to belong to the minimal assembly required for catalysis. Complex I functions in the transfer of electrons from NADH to the respiratory chain. The immediate electron acceptor for the enzyme is believed to be ubiquinone. This is NADH-ubiquinone oxidoreductase chain 6 (MT-ND6) from Cepphus columba (Pigeon guillemot).